The following is a 516-amino-acid chain: Lysophosphatidylcholine acyltransferase 2B (516 aa).

N-linked (GlcNAc...) asparagine glycosylation occurs at asparagine 28. Helical transmembrane passes span 44–64 (THLS…LVPV), 68–88 (CIVF…INLP), and 102–122 (LIKS…GFLV). The HXXXXD motif signature appears at 142–147 (HSTFFD). 2 consecutive EF-hand domains span residues 387–422 (PISE…LCNP) and 424–459 (NTEK…AFGV). 10 residues coordinate Ca(2+): aspartate 400, asparagine 402, aspartate 404, threonine 406, glutamate 411, aspartate 437, aspartate 439, aspartate 441, tyrosine 443, and glutamate 448.

The protein belongs to the 1-acyl-sn-glycerol-3-phosphate acyltransferase family.

The protein localises to the membrane. The protein operates within lipid metabolism; phospholipid metabolism. In terms of biological role, probable acetyltransferase. This is Lysophosphatidylcholine acyltransferase 2B (Lpcat2b) from Mus musculus (Mouse).